A 349-amino-acid chain; its full sequence is Prostaglandin reductase 1 (349 aa).

The residue at position 18 (threonine 18) is a Phosphothreonine. At serine 20 the chain carries Phosphoserine. NADP(+)-binding positions include 152 to 155 (GAVG), lysine 178, tyrosine 193, asparagine 217, 239 to 245 (CGAISMY), 270 to 272 (FIF), and asparagine 321. Position 178 is an N6-(2-hydroxyisobutyryl)lysine; alternate (lysine 178). Lysine 178 carries the N6-acetyllysine; alternate modification.

It belongs to the NADP-dependent oxidoreductase L4BD family. In terms of assembly, monomer or homodimer.

The protein resides in the cytoplasm. It catalyses the reaction 13,14-dihydro-15-oxo-prostaglandin E1 + NADP(+) = 15-oxoprostaglandin E1 + NADPH + H(+). It carries out the reaction 13,14-dihydro-15-oxo-prostaglandin E2 + NADP(+) = 15-oxoprostaglandin E2 + NADPH + H(+). The enzyme catalyses 13,14-dihydro-15-oxo-prostaglandin F1alpha + NADP(+) = 15-oxoprostaglandin F1alpha + NADPH + H(+). The catalysed reaction is 13,14-dihydro-15-oxo-PGF2alpha + NADP(+) = 15-oxoprostaglandin F2alpha + NADPH + H(+). It catalyses the reaction leukotriene B4 + NADP(+) = 12-oxo-leukotriene B4 + NADPH + H(+). It carries out the reaction 20-hydroxy-leukotriene B4 + NADP(+) = 12-oxo-20-hydroxy-leukotriene B4 + NADPH + H(+). The enzyme catalyses 6-trans-leukotriene B4 + NADP(+) = 12-oxo-(5S)-hydroxy-(6E,8E,10E,14Z)-eicosatetraenoate + NADPH + H(+). The catalysed reaction is (5S,12S)-dihydroxy-(6E,10E,12E,14Z)-eicosatetraenoate + NADP(+) = 12-oxo-(5S)-hydroxy-(6E,8E,10E,14Z)-eicosatetraenoate + NADPH + H(+). It catalyses the reaction an n-alkanal + NADP(+) = an alk-2-enal + NADPH + H(+). It carries out the reaction hexanal + NADP(+) = (E)-hex-2-enal + NADPH + H(+). The enzyme catalyses octanal + NADP(+) = (2E)-octenal + NADPH + H(+). The catalysed reaction is decanal + NADP(+) = (2E)-decenal + NADPH + H(+). It catalyses the reaction dodecanal + NADP(+) = (2E)-dodecenal + NADPH + H(+). It carries out the reaction 4-hydroxynonanal + NADP(+) = (E)-4-hydroxynon-2-enal + NADPH + H(+). The enzyme catalyses pentan-2-one + NADP(+) = (E)-pent-3-en-2-one + NADPH + H(+). The catalysed reaction is nonan-2-one + NADP(+) = (3E)-nonen-2-one + NADPH + H(+). NAD(P)H-dependent oxidoreductase involved in metabolic inactivation of pro- and anti-inflammatory eicosanoids: prostaglandins (PG), leukotrienes (LT) and lipoxins (LX). Catalyzes with high efficiency the reduction of the 13,14 double bond of 15-oxoPGs, including 15-oxo-PGE1, 15-oxo-PGE2, 15-oxo-PGF1-alpha and 15-oxo-PGF2-alpha. Catalyzes with lower efficiency the oxidation of the hydroxyl group at C12 of LTB4 and its derivatives, converting them into biologically less active 12-oxo-LTB4 metabolites. Reduces 15-oxo-LXA4 to 13,14 dihydro-15-oxo-LXA4, enhancing neutrophil recruitment at the inflammatory site. Plays a role in metabolic detoxification of alkenals and ketones. Reduces alpha,beta-unsaturated alkenals and ketones, particularly those with medium-chain length, showing highest affinity toward (2E)-decenal and (3E)-3-nonen-2-one. May inactivate 4-hydroxy-2-nonenal, a cytotoxic lipid constituent of oxidized low-density lipoprotein particles. This chain is Prostaglandin reductase 1 (PTGR1), found in Oryctolagus cuniculus (Rabbit).